Consider the following 596-residue polypeptide: Zinc finger CCCH domain-containing protein 64 (596 aa).

Disordered regions lie at residues 243-263 (LSPT…PPKT) and 272-291 (DGAA…SQYW). 2 C3H1-type zinc fingers span residues 303–331 (SQGE…HNAE) and 335–363 (QCRR…HEFQ).

The chain is Zinc finger CCCH domain-containing protein 64 from Arabidopsis thaliana (Mouse-ear cress).